Consider the following 2527-residue polypeptide: Leucine-rich repeat serine/threonine-protein kinase 2 (2527 aa).

The interval 1–969 is required for RAB29-mediated activation; that stretch reads MASGACQGCE…RSSRLPSHMR (969 aa). Residues 9-33 adopt a coiled-coil conformation; sequence CEEEEEEEALKKLIVRLNNVQEGKQ. Residues Ser-910, Ser-935, Ser-955, and Ser-973 each carry the phosphoserine modification. Positions 957–979 are disordered; sequence ESLRSSRLPSHMRQSDSSSSLAS. The segment covering 961–978 has biased composition (low complexity); it reads SSRLPSHMRQSDSSSSLA. LRR repeat units follow at residues 983 to 1004, 1012 to 1033, 1036 to 1057, 1059 to 1080, 1084 to 1105, 1108 to 1129, 1130 to 1150, 1156 to 1171, 1174 to 1196, 1197 to 1218, 1221 to 1245, 1246 to 1267, and 1269 to 1291; these read HITS…SQKC, HLTK…LCET, CLIH…VLKM, RITN…DPAM, SLKQ…LAQV, KLEQ…LSLK, ELKI…DFLE, ESFS…MPAL, SITS…FSLP, HLRS…AHWK, NLRE…HVWS, RVEK…IGCL, and NLTS…MGKL. Position 1292 is a phosphoserine; by autocatalysis (Ser-1292). Positions 1328 to 1511 constitute a Roc domain; sequence KAVPYNRMKL…KTIINESLNF (184 aa). 1341–1348 is a binding site for GTP; sequence GNTGSGKT. Phosphoserine is present on Ser-1444. Residues 1543–1740 form the COR domain; that stretch reads TEFPVINRKH…RMYWRQGIYL (198 aa). One can recognise a Protein kinase domain in the interval 1879-2146; the sequence is EAPEFLLGDG…LICLMRHILI (268 aa). 12 residues coordinate ATP: Leu-1885, Asp-1887, Gly-1888, Gly-1891, Val-1893, Ala-1904, Lys-1906, Met-1947, Glu-1948, Ala-1950, Ser-1954, and Arg-1957. Residue Asp-1994 is the Proton acceptor of the active site. The ATP site is built by His-1998, Leu-2001, Ala-2016, and Asp-2017. 2098–2121 serves as a coordination point for GTP; that stretch reads EYGCAPWPMVEKLITKCLKENPQE. WD repeat units lie at residues 2139–2183, 2188–2228, 2233–2276, 2281–2327, 2333–2377, 2402–2438, and 2443–2497; these read CLMR…SLFD, RYSY…LVIN, TKRH…MIFE, KCKG…FSFS, QKLI…EVWD, KESK…LLLD, and RVIR…SIWD. Position 2295 to 2298 (2295 to 2298) interacts with GTP; that stretch reads DVST.

The protein belongs to the protein kinase superfamily. TKL Ser/Thr protein kinase family. As to quaternary structure, homodimer. Homotetramer; when activated by GTP-bound RAB29. Interacts with PRKN, PRDX3 and TPCN2. Interacts with VPS35. Interacts (via N-terminus) with RAB29; this interaction is direct and stimulates kinase activity. Interacts (via ROC domain) with SEC16A. Interacts with APP; interaction promotes phosphorylation of 'Thr-743' of APP. Interacts with MAPT. Interacts with RAB8A, RAB10, and RAB12. Interacts (via N-terminus) with RAB32. Interacts with YWHAG; this interaction is dependent on phosphorylation of Ser-910 and either Ser-935 or Ser-1444. Interacts with SFN; this interaction is dependent on phosphorylation of Ser-910 and/or Ser-935. It depends on Mg(2+) as a cofactor. Autophosphorylated at Ser-1292. Autophosphorylation is stimulated by RAB29. Phosphorylation of Ser-910 and Ser-935 or Ser-1444 facilitates interaction with YWHAG. Phosphorylation of Ser-910 and/or Ser-935 facilitates interaction with SFN. Post-translationally, ubiquitinated by TRIM1; undergoes 'Lys-48'-linked polyubiquitination leading to proteasomal degradation. Expressed in the brain (at protein level). Detected throughout the adult brain. Expressed in deep cerebral cortex layers, superficial cingulate cortex layers, the piriform cortex, hippocampal formation, caudate putamen, substantia nigra, the basolateral and basomedial anterior amygdala nuclei, reticular thalamic nucleus and also in the cerebellar granular cell layer. Highly expressed in the striatum, cortex and olfactory tubercle. Little or no expression in the substantia nigra, where dopaminergic neurons preferentially degenerate in Parkinson disease. Expression is particularly high in brain dopaminoceptive areas. High and strikingly specific expression in striatum and parts of cortex and no signals in dopamine neurons.

It localises to the cytoplasmic vesicle. The protein resides in the perikaryon. Its subcellular location is the cell projection. The protein localises to the axon. It is found in the dendrite. It localises to the golgi apparatus membrane. The protein resides in the endoplasmic reticulum membrane. Its subcellular location is the secretory vesicle. The protein localises to the synaptic vesicle membrane. It is found in the endosome. It localises to the lysosome. The protein resides in the mitochondrion outer membrane. Its subcellular location is the cytoplasm. The protein localises to the cytoskeleton. It is found in the phagosome. It carries out the reaction L-threonyl-[protein] + ATP = O-phospho-L-threonyl-[protein] + ADP + H(+). It catalyses the reaction L-seryl-[protein] + ATP = O-phospho-L-seryl-[protein] + ADP + H(+). The catalysed reaction is GTP + H2O = GDP + phosphate + H(+). Kinase activity is regulated by the GTPase activity of the ROC domain. GTP-bound LRRK2 kinase activity is stimulated by RAB29. Phosphorylation of RAB10 'Thr-73' is stimulated by RAB29 and RAB32. Inhibited by small molecule inhibitors MLi-2 and LRRK2-IN-1. Functionally, serine/threonine-protein kinase which phosphorylates a broad range of proteins involved in multiple processes such as neuronal plasticity, innate immunity, autophagy, and vesicle trafficking. Is a key regulator of RAB GTPases by regulating the GTP/GDP exchange and interaction partners of RABs through phosphorylation. Phosphorylates RAB3A, RAB3B, RAB3C, RAB3D, RAB8A, RAB8B, RAB10, RAB12, RAB29, RAB35, and RAB43. Regulates the RAB3IP-catalyzed GDP/GTP exchange for RAB8A through the phosphorylation of 'Thr-72' on RAB8A. Inhibits the interaction between RAB8A and GDI1 and/or GDI2 by phosphorylating 'Thr-72' on RAB8A. Regulates primary ciliogenesis through phosphorylation of RAB8A and RAB10, which promotes SHH signaling in the brain. Together with RAB29, plays a role in the retrograde trafficking pathway for recycling proteins, such as mannose-6-phosphate receptor (M6PR), between lysosomes and the Golgi apparatus in a retromer-dependent manner. Regulates neuronal process morphology in the intact central nervous system (CNS). Plays an important role in recruiting SEC16A to endoplasmic reticulum exit sites (ERES) and in regulating ER to Golgi vesicle-mediated transport and ERES organization. Positively regulates autophagy through a calcium-dependent activation of the CaMKK/AMPK signaling pathway. The process involves activation of nicotinic acid adenine dinucleotide phosphate (NAADP) receptors, increase in lysosomal pH, and calcium release from lysosomes. Phosphorylates PRDX3. By phosphorylating APP on 'Thr-743', which promotes the production and the nuclear translocation of the APP intracellular domain (AICD), regulates dopaminergic neuron apoptosis. Acts as a positive regulator of innate immunity by mediating phosphorylation of RIPK2 downstream of NOD1 and NOD2, thereby enhancing RIPK2 activation. Independent of its kinase activity, inhibits the proteasomal degradation of MAPT, thus promoting MAPT oligomerization and secretion. In addition, has GTPase activity via its Roc domain which regulates LRKK2 kinase activity. Recruited by RAB29/RAB7L1 to overloaded lysosomes where it phosphorylates and stabilizes RAB8A and RAB10 which promote lysosomal content release and suppress lysosomal enlargement through the EHBP1 and EHBP1L1 effector proteins. This chain is Leucine-rich repeat serine/threonine-protein kinase 2 (Lrrk2), found in Mus musculus (Mouse).